The primary structure comprises 341 residues: Cysteine-rich repeat secretory protein 1 (341 aa).

The N-terminal stretch at 1 to 25 (MFSLPLHQSKLIFLLSFLLIKTLNA) is a signal peptide. Gnk2-homologous domains are found at residues 28-131 (TYLL…SRKI) and 136-245 (DQGP…ATFL). 4 disulfides stabilise this stretch: Cys-85/Cys-94, Cys-97/Cys-122, Cys-199/Cys-208, and Cys-211/Cys-236. A compositionally biased stretch (pro residues) spans 247–262 (PPPPPPPPPPPPPPPQ). The interval 247–274 (PPPPPPPPPPPPPPPQRLYGENDTPSSD) is disordered.

Belongs to the cysteine-rich repeat secretory protein family.

Its subcellular location is the secreted. The sequence is that of Cysteine-rich repeat secretory protein 1 (CRRSP1) from Arabidopsis thaliana (Mouse-ear cress).